A 99-amino-acid polypeptide reads, in one-letter code: MQFTLEFGGGLELLCDSVKIHKVNINLLNDSDILTMKDLLSWVRTNLIKERPEMFMKGDTVRPGVLVLVNDCDWELSGQLDTTLEDKDVIVFISTLHGG.

A 1-thioglycine modification is found at glycine 99. Residue glycine 99 forms a Glycyl lysine isopeptide (Gly-Lys) (interchain with K-? in acceptor proteins) linkage.

The protein belongs to the URM1 family. Post-translationally, C-terminal thiocarboxylation occurs in 2 steps, it is first acyl-adenylated (-COAMP) via the hesA/moeB/thiF part of the MOCS3 homolog, then thiocarboxylated (-COSH) via the rhodanese domain of the MOCS3 homolog.

The protein resides in the cytoplasm. It participates in tRNA modification; 5-methoxycarbonylmethyl-2-thiouridine-tRNA biosynthesis. Functionally, acts as a sulfur carrier required for 2-thiolation of mcm(5)S(2)U at tRNA wobble positions of cytosolic tRNA(Lys), tRNA(Glu) and tRNA(Gln). Serves as sulfur donor in tRNA 2-thiolation reaction by being thiocarboxylated (-COSH) at its C-terminus by MOCS3. The sulfur is then transferred to tRNA to form 2-thiolation of mcm(5)S(2)U. Also acts as a ubiquitin-like protein (UBL) that is covalently conjugated via an isopeptide bond to lysine residues of target proteins. The thiocarboxylated form serves as substrate for conjugation and oxidative stress specifically induces the formation of UBL-protein conjugates. The sequence is that of Ubiquitin-related modifier 1 homolog 2 from Arabidopsis thaliana (Mouse-ear cress).